The following is a 1088-amino-acid chain: Neural cell adhesion molecule 1-A (1088 aa).

The first 19 residues, 1–19 (MLHIKDLIWTLYFIGTAVA), serve as a signal peptide directing secretion. 5 consecutive Ig-like C2-type domains span residues 20–108 (LEVN…GTVN), 113–202 (QKLT…KDIQ), 209–294 (PTIQ…AEAT), 303–397 (PKIT…FEVQ), and 400–484 (PKIR…HEFS). Topologically, residues 20–705 (LEVNIVPDQG…TASAGTGLGT (686 aa)) are extracellular. 2 disulfide bridges follow: Cys-41–Cys-93 and Cys-136–Cys-186. N-linked (GlcNAc...) asparagine glycosylation is present at Asn-82. Residues 149–153 (RHKGK) and 158–162 (KKDVR) each bind heparin. Asn-219 is a glycosylation site (N-linked (GlcNAc...) asparagine). Cys-232 and Cys-282 are joined by a disulfide. Residues Asn-310, Asn-341, Asn-417, Asn-443, and Asn-472 are each glycosylated (N-linked (GlcNAc...) asparagine). Cys-323 and Cys-379 are disulfide-bonded. The cysteines at positions 420 and 473 are disulfide-linked. 2 Fibronectin type-III domains span residues 493-592 (TPSS…TQPV) and 594-690 (EPSA…TAKP). Residues 706–723 (GAIVGILIVIFVLLLVVV) form a helical membrane-spanning segment. The Cytoplasmic portion of the chain corresponds to 724–1088 (DVTCFFLNKC…TQTNANESKA (365 aa)). The span at 758-784 (EGKAAFSKDESKEPIVEVRTEEERTPN) shows a compositional bias: basic and acidic residues. Disordered stretches follow at residues 758 to 802 (EGKA…LTEP), 829 to 1000 (FATA…DGGT), and 1024 to 1088 (VASG…ESKA). 3 stretches are compositionally biased toward low complexity: residues 835-847 (SPTSETTTLTSST), 854-875 (APDSNTIQSIQATPSKAEAPTT), and 913-936 (PSAATSAAEPPTVIIKPVTTVPPN). Over residues 965 to 974 (QPSTVKNPTE) the composition is skewed to polar residues. The segment covering 1046–1064 (AKTEKTQVEEKSKPEEIDV) has biased composition (basic and acidic residues). Positions 1076–1088 (NEATQTNANESKA) are enriched in polar residues.

In terms of processing, polysialylated by ST8SIA2 and ST8SIA4. Polysialylation modulates cell interactions by confering both attractive and repulsive properties that are highly regulated by ST8SIA2 and ST8SIA4. Polysialylation is formed on a-2,3-linked sialic acid of core glycans. Expressed in neuron and in presumptive neural tissue.

It localises to the cell membrane. This protein is a cell adhesion molecule involved in neuron-neuron adhesion, neurite fasciculation, outgrowth of neurites, etc. The protein is Neural cell adhesion molecule 1-A of Xenopus laevis (African clawed frog).